The sequence spans 299 residues: Probable 3-hydroxyisobutyrate dehydrogenase-like 2, mitochondrial (299 aa).

Residues 14 to 43 and Ser108 contribute to the NAD(+) site; that span reads TRIG…TVYA. Lys182 is a catalytic residue. Lys250 serves as a coordination point for NAD(+).

This sequence belongs to the HIBADH-related family. 3-hydroxyisobutyrate dehydrogenase subfamily.

The protein localises to the mitochondrion. It carries out the reaction 3-hydroxy-2-methylpropanoate + NAD(+) = 2-methyl-3-oxopropanoate + NADH + H(+). It participates in amino-acid degradation; L-valine degradation. The polypeptide is Probable 3-hydroxyisobutyrate dehydrogenase-like 2, mitochondrial (Arabidopsis thaliana (Mouse-ear cress)).